Consider the following 106-residue polypeptide: uORF protein (106 aa).

Residues 1 to 19 (MDLETRVSGHEKPQRRNPE) show a composition bias toward basic and acidic residues. Residues 1–31 (MDLETRVSGHEKPQRRNPEDPDCQYAKTRSS) form a disordered region.

The protein localises to the host cytoplasm. It localises to the host cytoskeleton. Its function is as follows. Plays a role in viral replication. The sequence is that of uORF protein from Zika virus (ZIKV).